A 432-amino-acid polypeptide reads, in one-letter code: Adenylosuccinate synthetase (432 aa).

Residues 13–19 (GDEGKGK) and 41–43 (GHT) contribute to the GTP site. The active-site Proton acceptor is Asp-14. 2 residues coordinate Mg(2+): Asp-14 and Gly-41. Residues 14-17 (DEGK), 39-42 (NAGH), Thr-130, Arg-144, Gln-225, Thr-240, and Arg-304 each bind IMP. His-42 serves as the catalytic Proton donor. Position 300–306 (300–306 (AVTGRPR)) interacts with substrate. Residues Arg-306, 332–334 (KLD), and 415–417 (STG) each bind GTP.

This sequence belongs to the adenylosuccinate synthetase family. Homodimer. Mg(2+) is required as a cofactor.

The protein localises to the cytoplasm. The catalysed reaction is IMP + L-aspartate + GTP = N(6)-(1,2-dicarboxyethyl)-AMP + GDP + phosphate + 2 H(+). It participates in purine metabolism; AMP biosynthesis via de novo pathway; AMP from IMP: step 1/2. Functionally, plays an important role in the de novo pathway of purine nucleotide biosynthesis. Catalyzes the first committed step in the biosynthesis of AMP from IMP. The sequence is that of Adenylosuccinate synthetase from Actinobacillus pleuropneumoniae serotype 3 (strain JL03).